We begin with the raw amino-acid sequence, 292 residues long: MRTPVVMTLGMVLAPCGLLLNLTGTLAPGWRLVKGFLNQPVDVELYQGLWDMCREQSSRERECGQTDQWGYFEAQPVLVARALMVTSLAATVLGLLLASLGVRCWQDEPNFVLAGLSGVVLFVAGLLGLIPVSWYNHFLGDRDVLPAPASPVTVQVSYSLVLGYLGSCLLLLGGFSLALSFAPWCDERCRRRRKGPSAGPRRSSVSTIQVEWPEPDLAPAIKYYSDGQHRPPPAQHRKPKPKPKVGFPMPRPRPKAYTNSVDVLDGEGWESQDAPSCSTHPCDSSLPCDSDL.

At 1–3 the chain is on the cytoplasmic side; the sequence is MRT. A helical transmembrane segment spans residues 4–24; the sequence is PVVMTLGMVLAPCGLLLNLTG. Topologically, residues 25 to 81 are extracellular; sequence TLAPGWRLVKGFLNQPVDVELYQGLWDMCREQSSRERECGQTDQWGYFEAQPVLVAR. Residues 82-102 form a helical membrane-spanning segment; it reads ALMVTSLAATVLGLLLASLGV. Over 103-110 the chain is Cytoplasmic; sequence RCWQDEPN. Residues 111–131 traverse the membrane as a helical segment; the sequence is FVLAGLSGVVLFVAGLLGLIP. The Extracellular segment spans residues 132 to 160; sequence VSWYNHFLGDRDVLPAPASPVTVQVSYSL. The helical transmembrane segment at 161–181 threads the bilayer; sequence VLGYLGSCLLLLGGFSLALSF. Residues 182–292 lie on the Cytoplasmic side of the membrane; that stretch reads APWCDERCRR…DSSLPCDSDL (111 aa). The disordered stretch occupies residues 222 to 292; that stretch reads KYYSDGQHRP…DSSLPCDSDL (71 aa). Over residues 273-282 the composition is skewed to polar residues; that stretch reads DAPSCSTHPC.

The protein belongs to the claudin family. In terms of tissue distribution, expressed in germinal center B-cells, placenta, stomach as well as in colon tumor.

It is found in the cell junction. The protein resides in the tight junction. It localises to the cell membrane. In terms of biological role, plays a major role in tight junction-specific obliteration of the intercellular space, through calcium-independent cell-adhesion activity. The sequence is that of Claudin-23 (CLDN23) from Homo sapiens (Human).